Reading from the N-terminus, the 374-residue chain is Isopentenyl-diphosphate delta-isomerase (374 aa).

13 to 14 (RK) contacts substrate. FMN is bound by residues 71-73 (GMT), S104, and N132. 104–106 (SQR) lines the substrate pocket. Q171 contributes to the substrate binding site. Residue E172 coordinates Mg(2+). FMN-binding positions include K203, T233, 282–284 (GMR), and 303–304 (AL).

The protein belongs to the IPP isomerase type 2 family. In terms of assembly, homooctamer. Dimer of tetramers. FMN serves as cofactor. The cofactor is NADPH. Mg(2+) is required as a cofactor.

It is found in the cytoplasm. It carries out the reaction isopentenyl diphosphate = dimethylallyl diphosphate. Involved in the biosynthesis of isoprenoids. Catalyzes the 1,3-allylic rearrangement of the homoallylic substrate isopentenyl (IPP) to its allylic isomer, dimethylallyl diphosphate (DMAPP). This is Isopentenyl-diphosphate delta-isomerase from Thermococcus kodakarensis (strain ATCC BAA-918 / JCM 12380 / KOD1) (Pyrococcus kodakaraensis (strain KOD1)).